We begin with the raw amino-acid sequence, 100 residues long: Urease subunit gamma (100 aa).

Belongs to the urease gamma subunit family. In terms of assembly, heterotrimer of UreA (gamma), UreB (beta) and UreC (alpha) subunits. Three heterotrimers associate to form the active enzyme.

The protein resides in the cytoplasm. The catalysed reaction is urea + 2 H2O + H(+) = hydrogencarbonate + 2 NH4(+). It functions in the pathway nitrogen metabolism; urea degradation; CO(2) and NH(3) from urea (urease route): step 1/1. The protein is Urease subunit gamma of Allorhizobium ampelinum (strain ATCC BAA-846 / DSM 112012 / S4) (Agrobacterium vitis (strain S4)).